We begin with the raw amino-acid sequence, 298 residues long: Glutamyl-Q tRNA(Asp) synthetase (298 aa).

Residues 9-13 (RFAPS) and Glu45 contribute to the L-glutamate site. Positions 12–22 (PSPSGELHFGS) match the 'HIGH' region motif. Zn(2+) is bound by residues Cys101, Cys103, Tyr115, and Cys119. 2 residues coordinate L-glutamate: Tyr172 and Arg190. The 'KMSKS' region motif lies at 228-232 (KLSKQ). Lys231 is a binding site for ATP.

The protein belongs to the class-I aminoacyl-tRNA synthetase family. GluQ subfamily. Requires Zn(2+) as cofactor.

Its function is as follows. Catalyzes the tRNA-independent activation of glutamate in presence of ATP and the subsequent transfer of glutamate onto a tRNA(Asp). Glutamate is transferred on the 2-amino-5-(4,5-dihydroxy-2-cyclopenten-1-yl) moiety of the queuosine in the wobble position of the QUC anticodon. The protein is Glutamyl-Q tRNA(Asp) synthetase of Cronobacter sakazakii (strain ATCC BAA-894) (Enterobacter sakazakii).